The primary structure comprises 191 residues: Probable molybdenum cofactor guanylyltransferase (191 aa).

GTP contacts are provided by residues 6-8 (LAG), Lys18, Asp67, and Asp92. Position 92 (Asp92) interacts with Mg(2+).

This sequence belongs to the MobA family. Mg(2+) serves as cofactor.

Its subcellular location is the cytoplasm. The enzyme catalyses Mo-molybdopterin + GTP + H(+) = Mo-molybdopterin guanine dinucleotide + diphosphate. Transfers a GMP moiety from GTP to Mo-molybdopterin (Mo-MPT) cofactor (Moco or molybdenum cofactor) to form Mo-molybdopterin guanine dinucleotide (Mo-MGD) cofactor. This chain is Probable molybdenum cofactor guanylyltransferase, found in Thermococcus gammatolerans (strain DSM 15229 / JCM 11827 / EJ3).